Reading from the N-terminus, the 119-residue chain is Beta-2-microglobulin (119 aa).

The N-terminal stretch at 1-20 is a signal peptide; sequence MARSVVVALLVLLSLSGLEA. The 90-residue stretch at 25–114 folds into the Ig-like C1-type domain; the sequence is PKIQVYSRHP…VTFPTPKTVK (90 aa). A disulfide bridge links Cys-45 with Cys-100.

It belongs to the beta-2-microglobulin family. Heterodimer of an alpha chain and a beta chain. Beta-2-microglobulin is the beta-chain of major histocompatibility complex class I molecules.

It localises to the secreted. Its function is as follows. Component of the class I major histocompatibility complex (MHC). Involved in the presentation of peptide antigens to the immune system. The sequence is that of Beta-2-microglobulin (B2M) from Lagothrix lagotricha (Brown woolly monkey).